Consider the following 286-residue polypeptide: Beta-lactamase SHV-5 (286 aa).

An N-terminal signal peptide occupies residues M1–A21. Residue S66 is the Acyl-ester intermediate of the active site. C73 and C119 are joined by a disulfide. The Proton acceptor role is filled by E164. Residue K230 to G232 participates in substrate binding.

It belongs to the class-A beta-lactamase family.

The catalysed reaction is a beta-lactam + H2O = a substituted beta-amino acid. SHV enzymes hydrolyze broad spectrum cephalosporins notably cefotaxime and ceftazidime. SHV-5 causes particularly high levels of resistance to aztreonam and ceftazidime. The polypeptide is Beta-lactamase SHV-5 (bla) (Klebsiella pneumoniae).